Here is a 158-residue protein sequence, read N- to C-terminus: Putative zinc-binding protein ORF9 (158 aa).

The segment at 72 to 111 (CPVCGRAVVGPTVREACGHVTCNACETEACAVDRLCIGGG) adopts an RING-type; degenerate zinc-finger fold. Residues 126–158 (GPRWRGPRPTRPEAHEAVQRSRGSSEDACTCAP) form a disordered region. The segment covering 135–150 (TRPEAHEAVQRSRGSS) has biased composition (basic and acidic residues).

This chain is Putative zinc-binding protein ORF9 (ORF9), found in Ictalurid herpesvirus 1 (strain Auburn) (IcHV-1).